The following is a 256-amino-acid chain: 5-keto-4-deoxy-D-glucarate aldolase (256 aa).

His50 acts as the Proton acceptor in catalysis. Position 151 (Gln151) interacts with substrate. Glu153 is a Mg(2+) binding site. Ser178 and Asp179 together coordinate substrate. Asp179 is a binding site for Mg(2+).

Belongs to the HpcH/HpaI aldolase family. KDGluc aldolase subfamily. As to quaternary structure, homohexamer; trimer of dimers. Requires Mg(2+) as cofactor.

It catalyses the reaction 5-dehydro-4-deoxy-D-glucarate = 2-hydroxy-3-oxopropanoate + pyruvate. It carries out the reaction 2-dehydro-3-deoxy-D-glucarate = 2-hydroxy-3-oxopropanoate + pyruvate. Its pathway is carbohydrate acid metabolism; galactarate degradation; D-glycerate from galactarate: step 2/3. Its function is as follows. Catalyzes the reversible retro-aldol cleavage of both 5-keto-4-deoxy-D-glucarate and 2-keto-3-deoxy-D-glucarate to pyruvate and tartronic semialdehyde. The protein is 5-keto-4-deoxy-D-glucarate aldolase of Escherichia coli O157:H7 (strain EC4115 / EHEC).